Consider the following 145-residue polypeptide: 3-hydroxyacyl-[acyl-carrier-protein] dehydratase FabZ (145 aa).

Histidine 49 is an active-site residue.

The protein belongs to the thioester dehydratase family. FabZ subfamily.

The protein resides in the cytoplasm. The enzyme catalyses a (3R)-hydroxyacyl-[ACP] = a (2E)-enoyl-[ACP] + H2O. Its function is as follows. Involved in unsaturated fatty acids biosynthesis. Catalyzes the dehydration of short chain beta-hydroxyacyl-ACPs and long chain saturated and unsaturated beta-hydroxyacyl-ACPs. This is 3-hydroxyacyl-[acyl-carrier-protein] dehydratase FabZ from Ehrlichia ruminantium (strain Welgevonden).